The primary structure comprises 367 residues: Ferredoxin--NADP reductase 2 (367 aa).

The FAD site is built by aspartate 56, glutamine 64, tyrosine 69, valine 109, phenylalanine 144, aspartate 309, and threonine 350.

This sequence belongs to the ferredoxin--NADP reductase type 2 family. In terms of assembly, homodimer. Requires FAD as cofactor.

It carries out the reaction 2 reduced [2Fe-2S]-[ferredoxin] + NADP(+) + H(+) = 2 oxidized [2Fe-2S]-[ferredoxin] + NADPH. The sequence is that of Ferredoxin--NADP reductase 2 from Cupriavidus metallidurans (strain ATCC 43123 / DSM 2839 / NBRC 102507 / CH34) (Ralstonia metallidurans).